Here is a 399-residue protein sequence, read N- to C-terminus: Phosphoglycerate kinase (399 aa).

Substrate-binding positions include 22-24, arginine 37, 60-63, arginine 119, and arginine 152; these read DLN and HFGR. Residues lysine 202, glutamate 324, and 354 to 357 contribute to the ATP site; that span reads GGDT.

The protein belongs to the phosphoglycerate kinase family. In terms of assembly, monomer.

It localises to the cytoplasm. It catalyses the reaction (2R)-3-phosphoglycerate + ATP = (2R)-3-phospho-glyceroyl phosphate + ADP. Its pathway is carbohydrate degradation; glycolysis; pyruvate from D-glyceraldehyde 3-phosphate: step 2/5. This Sinorhizobium fredii (strain NBRC 101917 / NGR234) protein is Phosphoglycerate kinase.